The sequence spans 609 residues: UvrABC system protein C (609 aa).

The GIY-YIG domain occupies Ala19 to Val97. Residues Glu208–Phe243 enclose the UVR domain.

Belongs to the UvrC family. Interacts with UvrB in an incision complex.

It is found in the cytoplasm. The UvrABC repair system catalyzes the recognition and processing of DNA lesions. UvrC both incises the 5' and 3' sides of the lesion. The N-terminal half is responsible for the 3' incision and the C-terminal half is responsible for the 5' incision. The sequence is that of UvrABC system protein C from Leptospira interrogans serogroup Icterohaemorrhagiae serovar copenhageni (strain Fiocruz L1-130).